A 148-amino-acid polypeptide reads, in one-letter code: Large ribosomal subunit protein bL9 (148 aa).

The protein belongs to the bacterial ribosomal protein bL9 family.

Functionally, binds to the 23S rRNA. The chain is Large ribosomal subunit protein bL9 from Agathobacter rectalis (strain ATCC 33656 / DSM 3377 / JCM 17463 / KCTC 5835 / VPI 0990) (Eubacterium rectale).